Here is a 75-residue protein sequence, read N- to C-terminus: RNA-binding protein KhpA (75 aa).

The region spanning 29 to 75 is the KH domain; it reads SIILELKVAPEDMGKVIGKQGRIAKAIRTVIKAAAVKENKRVVVEII.

This sequence belongs to the KhpA RNA-binding protein family. In terms of assembly, forms a complex with KhpB.

The protein resides in the cytoplasm. In terms of biological role, a probable RNA chaperone. Forms a complex with KhpB which binds to cellular RNA and controls its expression. Plays a role in peptidoglycan (PG) homeostasis and cell length regulation. This is RNA-binding protein KhpA from Clostridium acetobutylicum (strain ATCC 824 / DSM 792 / JCM 1419 / IAM 19013 / LMG 5710 / NBRC 13948 / NRRL B-527 / VKM B-1787 / 2291 / W).